The chain runs to 131 residues: Conotoxin Cal8.2 (131 aa).

The first 19 residues, 1–19 (MKLLLTLLLGSALMCITLA), serve as a signal peptide directing secretion. Positions 20-38 (DECGLGTHRPVKEVIDNVR) are excised as a propeptide.

Contains 4 disulfide bonds. Expressed by the venom duct.

The protein localises to the secreted. Probable neurotoxin with unknown target. Possibly targets ion channels. This chain is Conotoxin Cal8.2, found in Californiconus californicus (California cone).